The sequence spans 300 residues: C-5 sterol desaturase (300 aa).

4 consecutive transmembrane segments (helical) span residues 3 to 23 (DPVL…WTAA), 68 to 88 (SLAL…QLSA), 91 to 111 (WYTW…YHRI), and 147 to 167 (ILMW…FCSW). The Fatty acid hydroxylase domain occupies 94-227 (WVIAIVGVDL…LIIWDRLFGS (134 aa)).

The protein belongs to the sterol desaturase family.

It localises to the cell membrane. The chain is C-5 sterol desaturase (erg3) from Mycobacterium bovis (strain ATCC BAA-935 / AF2122/97).